A 276-amino-acid polypeptide reads, in one-letter code: HTH-type transcriptional activator RhaR (276 aa).

In terms of domain architecture, HTH araC/xylS-type spans 174–272 (ESLFSALNQS…SCTPTEYRSR (99 aa)). 2 consecutive DNA-binding regions (H-T-H motif) follow at residues 191-212 (ADFC…KQQT) and 239-262 (VANI…GKTF).

Binds DNA as a dimer.

It localises to the cytoplasm. Its function is as follows. Activates expression of the rhaSR operon in response to L-rhamnose. The chain is HTH-type transcriptional activator RhaR from Mannheimia succiniciproducens (strain KCTC 0769BP / MBEL55E).